Reading from the N-terminus, the 169-residue chain is UPF0316 protein Dde_2502 (169 aa).

3 consecutive transmembrane segments (helical) span residues Met-1–Val-21, Leu-38–Ile-58, and Leu-68–Phe-88.

This sequence belongs to the UPF0316 family.

The protein resides in the cell membrane. The protein is UPF0316 protein Dde_2502 of Oleidesulfovibrio alaskensis (strain ATCC BAA-1058 / DSM 17464 / G20) (Desulfovibrio alaskensis).